We begin with the raw amino-acid sequence, 277 residues long: Coiled-coil domain-containing protein 117 (277 aa).

The interval 1-69 is disordered; it reads MAALGRPFSG…GRVSIHCRKK (69 aa). Positions 26-37 are enriched in low complexity; it reads FAGRAFPPGAAG. Arginine 47 carries the omega-N-methylarginine modification. Serine 52 carries the phosphoserine modification. A compositionally biased stretch (basic residues) spans 58–69; sequence ARGRVSIHCRKK. A coiled-coil region spans residues 139-166; it reads QCEVARRRLQEIEDRIIDEDEEVESDRN. The tract at residues 212-277 is disordered; it reads LPELLPEKPK…ATSTEEEMEL (66 aa).

As to quaternary structure, interacts with CIAO2B; the interaction is direct. Interacts with MMS19; the interaction is indirect.

Its subcellular location is the cytoplasm. It localises to the cytoskeleton. The protein localises to the spindle. It is found in the nucleus. Its function is as follows. Facilitates DNA repair, cell cycle progression, and cell proliferation through its interaction with CIAO2B. This chain is Coiled-coil domain-containing protein 117, found in Mus musculus (Mouse).